Here is a 108-residue protein sequence, read N- to C-terminus: uncharacterized protein (108 aa).

Residues 39-68 (GLRSRSGTGSGNSRNGLKESGGSRSGPGKP) are compositionally biased toward low complexity. Residues 39–95 (GLRSRSGTGSGNSRNGLKESGGSRSGPGKPRGNRKSSRRIRPRPTSEKPRGYWRSSW) form a disordered region. Positions 69-80 (RGNRKSSRRIRP) are enriched in basic residues.

This is an uncharacterized protein from Acidithiobacillus ferridurans.